Consider the following 272-residue polypeptide: Putative phosphoenolpyruvate synthase regulatory protein (272 aa).

152–159 (GVSRCGKT) serves as a coordination point for ADP.

Belongs to the pyruvate, phosphate/water dikinase regulatory protein family. PSRP subfamily.

The catalysed reaction is [pyruvate, water dikinase] + ADP = [pyruvate, water dikinase]-phosphate + AMP + H(+). The enzyme catalyses [pyruvate, water dikinase]-phosphate + phosphate + H(+) = [pyruvate, water dikinase] + diphosphate. Its function is as follows. Bifunctional serine/threonine kinase and phosphorylase involved in the regulation of the phosphoenolpyruvate synthase (PEPS) by catalyzing its phosphorylation/dephosphorylation. The polypeptide is Putative phosphoenolpyruvate synthase regulatory protein (Pseudomonas putida (strain W619)).